A 457-amino-acid polypeptide reads, in one-letter code: Cation efflux system protein CusC (457 aa).

Residues 1–17 (MSPCKLLPFCVALALTG) form the signal peptide. Cysteine 18 carries N-palmitoyl cysteine lipidation. The S-diacylglycerol cysteine moiety is linked to residue cysteine 18.

This sequence belongs to the outer membrane factor (OMF) (TC 1.B.17) family. In terms of assembly, homotrimer. Component of the cus efflux system composed of CusA, CusB, CusC and CusF.

The protein localises to the cell outer membrane. In terms of biological role, forms pores that allow passive diffusion of cations across the outer membrane. Part of a cation efflux system that mediates resistance to copper and silver. In pathogenic strains it allows the bacteria to invade brain microvascular endothelial cells (BMEC) thus allowing it to cross the blood-brain barrier and cause neonatal meningitis. The sequence is that of Cation efflux system protein CusC (cusC) from Escherichia coli (strain K12).